The following is a 275-amino-acid chain: Secreted RxLR effector protein 153 (275 aa).

Residues 1 to 27 form the signal peptide; sequence MRNRAFLFGLFFIEYACLVLFAAPTRA. Residue Asn45 is glycosylated (N-linked (GlcNAc...) asparagine). The short motif at 48-63 is the RxLR-dEER element; it reads RTLQADDSKRISAEER.

This sequence belongs to the RxLR effector family.

It localises to the secreted. The protein resides in the host cell membrane. Its function is as follows. Secreted effector that completely suppresses the host cell death induced by cell death-inducing proteins. The chain is Secreted RxLR effector protein 153 from Plasmopara viticola (Downy mildew of grapevine).